A 167-amino-acid chain; its full sequence is tRNA-specific adenosine deaminase (167 aa).

The region spanning 6–117 (FSHEYWMRHA…DAKTGAAGSL (112 aa)) is the CMP/dCMP-type deaminase domain. Histidine 57 lines the Zn(2+) pocket. Residue glutamate 59 is the Proton donor of the active site. Cysteine 87 and cysteine 90 together coordinate Zn(2+).

The protein belongs to the cytidine and deoxycytidylate deaminase family. In terms of assembly, homodimer. Zn(2+) serves as cofactor.

It catalyses the reaction adenosine(34) in tRNA + H2O + H(+) = inosine(34) in tRNA + NH4(+). Catalyzes the deamination of adenosine to inosine at the wobble position 34 of tRNA(Arg2). Essential for cell viability. This chain is tRNA-specific adenosine deaminase, found in Escherichia coli (strain K12).